The sequence spans 89 residues: Small ribosomal subunit protein uS15 (89 aa).

This sequence belongs to the universal ribosomal protein uS15 family. Part of the 30S ribosomal subunit. Forms a bridge to the 50S subunit in the 70S ribosome, contacting the 23S rRNA.

Functionally, one of the primary rRNA binding proteins, it binds directly to 16S rRNA where it helps nucleate assembly of the platform of the 30S subunit by binding and bridging several RNA helices of the 16S rRNA. Forms an intersubunit bridge (bridge B4) with the 23S rRNA of the 50S subunit in the ribosome. This Shewanella amazonensis (strain ATCC BAA-1098 / SB2B) protein is Small ribosomal subunit protein uS15.